The primary structure comprises 469 residues: Asparagine--tRNA ligase (469 aa).

It belongs to the class-II aminoacyl-tRNA synthetase family. As to quaternary structure, homodimer.

It is found in the cytoplasm. It catalyses the reaction tRNA(Asn) + L-asparagine + ATP = L-asparaginyl-tRNA(Asn) + AMP + diphosphate + H(+). This is Asparagine--tRNA ligase from Porphyromonas gingivalis (strain ATCC 33277 / DSM 20709 / CIP 103683 / JCM 12257 / NCTC 11834 / 2561).